The following is a 175-amino-acid chain: NADH-ubiquinone oxidoreductase chain 6 (175 aa).

The next 5 membrane-spanning stretches (helical) occupy residues 1–21 (MMTY…VGFS), 25–45 (SPIY…GIVM), 47–67 (FGGS…MLVV), 88–108 (VVMG…LCVL), and 149–169 (YGVW…IVVL).

It belongs to the complex I subunit 6 family.

Its subcellular location is the mitochondrion membrane. It catalyses the reaction a ubiquinone + NADH + 5 H(+)(in) = a ubiquinol + NAD(+) + 4 H(+)(out). Functionally, core subunit of the mitochondrial membrane respiratory chain NADH dehydrogenase (Complex I) that is believed to belong to the minimal assembly required for catalysis. Complex I functions in the transfer of electrons from NADH to the respiratory chain. The immediate electron acceptor for the enzyme is believed to be ubiquinone. The chain is NADH-ubiquinone oxidoreductase chain 6 (MT-ND6) from Rhinolophus monoceros (Formosan lesser horseshoe bat).